The primary structure comprises 369 residues: Flagellar P-ring protein (369 aa).

Residues Met-1–Ala-22 form the signal peptide.

It belongs to the FlgI family. In terms of assembly, the basal body constitutes a major portion of the flagellar organelle and consists of four rings (L,P,S, and M) mounted on a central rod.

The protein localises to the periplasm. Its subcellular location is the bacterial flagellum basal body. Assembles around the rod to form the L-ring and probably protects the motor/basal body from shearing forces during rotation. This Pseudomonas entomophila (strain L48) protein is Flagellar P-ring protein.